We begin with the raw amino-acid sequence, 175 residues long: uncharacterized protein (175 aa).

The first 33 residues, 1-33 (MERLPYEIVSTIFRKAILHYVLIRGTTYPQSLA), serve as a signal peptide directing secretion.

This is an uncharacterized protein from Methanocaldococcus jannaschii (strain ATCC 43067 / DSM 2661 / JAL-1 / JCM 10045 / NBRC 100440) (Methanococcus jannaschii).